The following is a 96-amino-acid chain: Probable quinol oxidase subunit 4 (96 aa).

The next 3 helical transmembrane spans lie at threonine 8–threonine 28, threonine 37–leucine 57, and phenylalanine 68–methionine 88.

The protein belongs to the cytochrome c oxidase bacterial subunit 4 family.

It is found in the cell membrane. It carries out the reaction 2 a quinol + O2 = 2 a quinone + 2 H2O. In terms of biological role, catalyzes quinol oxidation with the concomitant reduction of oxygen to water. The polypeptide is Probable quinol oxidase subunit 4 (qoxD) (Staphylococcus haemolyticus (strain JCSC1435)).